The chain runs to 206 residues: Ribosomal RNA small subunit methyltransferase G (206 aa).

S-adenosyl-L-methionine is bound by residues Gly74, Leu79, 125 to 126, and Arg140; that span reads VE.

The protein belongs to the methyltransferase superfamily. RNA methyltransferase RsmG family.

It is found in the cytoplasm. The enzyme catalyses guanosine(527) in 16S rRNA + S-adenosyl-L-methionine = N(7)-methylguanosine(527) in 16S rRNA + S-adenosyl-L-homocysteine. Specifically methylates the N7 position of guanine in position 527 of 16S rRNA. The polypeptide is Ribosomal RNA small subunit methyltransferase G (Shewanella sp. (strain MR-7)).